The sequence spans 159 residues: Ribosomal RNA large subunit methyltransferase H (159 aa).

Residues Leu76, Gly108, and 127–132 (FSRMTF) each bind S-adenosyl-L-methionine.

Belongs to the RNA methyltransferase RlmH family. Homodimer.

It localises to the cytoplasm. It carries out the reaction pseudouridine(1915) in 23S rRNA + S-adenosyl-L-methionine = N(3)-methylpseudouridine(1915) in 23S rRNA + S-adenosyl-L-homocysteine + H(+). In terms of biological role, specifically methylates the pseudouridine at position 1915 (m3Psi1915) in 23S rRNA. This is Ribosomal RNA large subunit methyltransferase H from Bacillus licheniformis (strain ATCC 14580 / DSM 13 / JCM 2505 / CCUG 7422 / NBRC 12200 / NCIMB 9375 / NCTC 10341 / NRRL NRS-1264 / Gibson 46).